Consider the following 453-residue polypeptide: Homogentisate 1,2-dioxygenase (453 aa).

H306 acts as the Proton acceptor in catalysis. Residues H349 and E355 each coordinate Fe cation. The homogentisate site is built by Y364 and H385. H385 is a Fe cation binding site.

Belongs to the homogentisate dioxygenase family. Hexamer; dimer of trimers. The cofactor is Fe cation.

The enzyme catalyses homogentisate + O2 = 4-maleylacetoacetate + H(+). Its pathway is amino-acid degradation; L-phenylalanine degradation; acetoacetate and fumarate from L-phenylalanine: step 4/6. Its function is as follows. Involved in the catabolism of homogentisate (2,5-dihydroxyphenylacetate or 2,5-OH-PhAc), a central intermediate in the degradation of phenylalanine and tyrosine. Catalyzes the oxidative ring cleavage of the aromatic ring of homogentisate to yield maleylacetoacetate. The chain is Homogentisate 1,2-dioxygenase from Rhizobium etli (strain CIAT 652).